A 363-amino-acid chain; its full sequence is Ethanolamine kinase 1 (363 aa).

It belongs to the choline/ethanolamine kinase family.

The protein localises to the cytoplasm. It carries out the reaction ethanolamine + ATP = phosphoethanolamine + ADP + H(+). It functions in the pathway phospholipid metabolism; phosphatidylethanolamine biosynthesis; phosphatidylethanolamine from ethanolamine: step 1/3. Its function is as follows. Highly specific for ethanolamine phosphorylation. May be a rate-controlling step in phosphatidylethanolamine biosynthesis. The protein is Ethanolamine kinase 1 (Etnk1) of Mus musculus (Mouse).